We begin with the raw amino-acid sequence, 349 residues long: Draxin (349 aa).

Positions 1 to 25 are cleaved as a signal peptide; it reads MAGPAIHTAPMLFLVLLLPLELSLA. Disordered stretches follow at residues 38-79, 118-145, and 244-273; these read PENH…QDGA, PYPE…RRDR, and DGWP…EGEP. The span at 120-131 shows a compositional bias: basic and acidic residues; the sequence is PEKENRPPGWER. 2 stretches are compositionally biased toward basic residues: residues 132 to 145 and 249 to 258; these read TRKR…RRDR and AKKKEKHRGK. N-linked (GlcNAc...) asparagine glycosylation occurs at N264.

It belongs to the draxin family. As to quaternary structure, interacts with LRP6.

It localises to the secreted. Its function is as follows. Chemorepulsive axon guidance protein required for the development of spinal cord and forebrain commissures. Acts as a chemorepulsive guidance protein for commissural axons during development. Able to inhibit or repel neurite outgrowth from dorsal spinal cord. Inhibits the stabilization of cytosolic beta-catenin (CTNNB1) via its interaction with LRP6, thereby acting as an antagonist of Wnt signaling pathway. This chain is Draxin, found in Homo sapiens (Human).